The chain runs to 82 residues: uncharacterized protein (82 aa).

A Resolvase/invertase-type recombinase catalytic domain is found at 11 to 82 (NVGIYVRVST…HIEQGIMTHC (72 aa)). S19 acts as the O-(5'-phospho-DNA)-serine intermediate in catalysis.

The protein belongs to the site-specific recombinase resolvase family.

This is an uncharacterized protein from Bacillus phage phi105 (Bacteriophage phi-105).